Consider the following 416-residue polypeptide: 5-methylthioadenosine/S-adenosylhomocysteine deaminase 2 (416 aa).

2 residues coordinate Zn(2+): His58 and His60. The substrate site is built by Glu86 and His178. Residue His205 coordinates Zn(2+). Glu208 and Asp293 together coordinate substrate. Asp293 is a binding site for Zn(2+).

It belongs to the metallo-dependent hydrolases superfamily. MTA/SAH deaminase family. Zn(2+) is required as a cofactor.

The enzyme catalyses S-adenosyl-L-homocysteine + H2O + H(+) = S-inosyl-L-homocysteine + NH4(+). The catalysed reaction is S-methyl-5'-thioadenosine + H2O + H(+) = S-methyl-5'-thioinosine + NH4(+). In terms of biological role, catalyzes the deamination of 5-methylthioadenosine and S-adenosyl-L-homocysteine into 5-methylthioinosine and S-inosyl-L-homocysteine, respectively. Is also able to deaminate adenosine. The polypeptide is 5-methylthioadenosine/S-adenosylhomocysteine deaminase 2 (Archaeoglobus fulgidus (strain ATCC 49558 / DSM 4304 / JCM 9628 / NBRC 100126 / VC-16)).